The primary structure comprises 89 residues: Small ribosomal subunit protein uS15 (89 aa).

Belongs to the universal ribosomal protein uS15 family. As to quaternary structure, part of the 30S ribosomal subunit. Forms a bridge to the 50S subunit in the 70S ribosome, contacting the 23S rRNA.

Its function is as follows. One of the primary rRNA binding proteins, it binds directly to 16S rRNA where it helps nucleate assembly of the platform of the 30S subunit by binding and bridging several RNA helices of the 16S rRNA. In terms of biological role, forms an intersubunit bridge (bridge B4) with the 23S rRNA of the 50S subunit in the ribosome. This Limosilactobacillus fermentum (strain NBRC 3956 / LMG 18251) (Lactobacillus fermentum) protein is Small ribosomal subunit protein uS15.